A 502-amino-acid polypeptide reads, in one-letter code: ATP synthase subunit alpha, chloroplastic (502 aa).

170–177 (GDRQTGKT) contacts ATP.

Belongs to the ATPase alpha/beta chains family. As to quaternary structure, F-type ATPases have 2 components, CF(1) - the catalytic core - and CF(0) - the membrane proton channel. CF(1) has five subunits: alpha(3), beta(3), gamma(1), delta(1), epsilon(1). CF(0) has four main subunits: a, b, b' and c.

The protein resides in the plastid. It is found in the chloroplast thylakoid membrane. The enzyme catalyses ATP + H2O + 4 H(+)(in) = ADP + phosphate + 5 H(+)(out). Its function is as follows. Produces ATP from ADP in the presence of a proton gradient across the membrane. The alpha chain is a regulatory subunit. The protein is ATP synthase subunit alpha, chloroplastic of Tupiella akineta (Green alga).